The chain runs to 456 residues: ATP synthase subunit beta 1 (456 aa).

152-159 (GGAGVGKS) contributes to the ATP binding site.

The protein belongs to the ATPase alpha/beta chains family. As to quaternary structure, F-type ATPases have 2 components, CF(1) - the catalytic core - and CF(0) - the membrane proton channel. CF(1) has five subunits: alpha(3), beta(3), gamma(1), delta(1), epsilon(1). CF(0) has three main subunits: a(1), b(2) and c(9-12). The alpha and beta chains form an alternating ring which encloses part of the gamma chain. CF(1) is attached to CF(0) by a central stalk formed by the gamma and epsilon chains, while a peripheral stalk is formed by the delta and b chains.

The protein resides in the cell membrane. It catalyses the reaction ATP + H2O + 4 H(+)(in) = ADP + phosphate + 5 H(+)(out). Functionally, produces ATP from ADP in the presence of a proton gradient across the membrane. The catalytic sites are hosted primarily by the beta subunits. This Listeria monocytogenes serovar 1/2a (strain ATCC BAA-679 / EGD-e) protein is ATP synthase subunit beta 1.